We begin with the raw amino-acid sequence, 407 residues long: Phosphopentomutase (407 aa).

Mn(2+)-binding residues include Asp-10, Asp-306, His-311, Asp-347, His-348, and His-359.

The protein belongs to the phosphopentomutase family. Mn(2+) serves as cofactor.

The protein resides in the cytoplasm. The catalysed reaction is 2-deoxy-alpha-D-ribose 1-phosphate = 2-deoxy-D-ribose 5-phosphate. It catalyses the reaction alpha-D-ribose 1-phosphate = D-ribose 5-phosphate. It participates in carbohydrate degradation; 2-deoxy-D-ribose 1-phosphate degradation; D-glyceraldehyde 3-phosphate and acetaldehyde from 2-deoxy-alpha-D-ribose 1-phosphate: step 1/2. In terms of biological role, isomerase that catalyzes the conversion of deoxy-ribose 1-phosphate (dRib-1-P) and ribose 1-phosphate (Rib-1-P) to deoxy-ribose 5-phosphate (dRib-5-P) and ribose 5-phosphate (Rib-5-P), respectively. The protein is Phosphopentomutase of Shigella boydii serotype 18 (strain CDC 3083-94 / BS512).